Reading from the N-terminus, the 339-residue chain is DNA double-strand break repair nuclease NurA (339 aa).

Positions 58 and 133 each coordinate Mn(2+).

It belongs to the NurA family. Homodimer. Forms a complex with HerA. Mn(2+) serves as cofactor.

Its activity is regulated as follows. Nuclease activity requires the presence of HerA. Another report shows endo- and exonuclease activity in the absence of HerA; HerA stimulates the exo- but not endonuclease. LhrC-Core (Hel112) inhibits the exonuclease activity of the HerA-NurA complex on ss- and dsDNA, has no effect on the nicking activity of NurA. Endo- and exonuclease activities are inhibited by ATP; ATP may subtract divalent ions from the reaction preventing nuclease activity, HerA can alleviate ATP inhibition. Functionally, involved in DNA double-strand break (DSB) repair. Probably acts with HerA to stimulate resection of the 5' strand and produce the long 3' single-strand that is required for RadA loading. NurA and HerA together stimulate the end-resection of six nucleotides of a linear DNA substrate. Processes linear double-stranded (ds)DNA probes with 3' or 5' single-stranded overhangs or blunt ends. Has endonuclease activity on single-stranded (ss)DNA and nicking activity on dsDNA without HerA as well as 5'- and 3'-exonuclease activity on ssDNA. Binds ssDNA, dsDNA, forked and bubble DNA equally well. The sequence is that of DNA double-strand break repair nuclease NurA from Saccharolobus solfataricus (strain ATCC 35092 / DSM 1617 / JCM 11322 / P2) (Sulfolobus solfataricus).